The sequence spans 119 residues: Histone H1B, sperm (119 aa).

In terms of domain architecture, H15 spans threonine 8–lysine 77. A disordered region spans residues asparagine 76–asparagine 119. Residues leucine 80–asparagine 119 show a composition bias toward basic residues.

It belongs to the histone H1/H5 family.

It is found in the nucleus. It localises to the chromosome. Histones H1 are necessary for the condensation of nucleosome chains into higher-order structures. In Platynereis dumerilii (Dumeril's clam worm), this protein is Histone H1B, sperm.